The following is a 729-amino-acid chain: Fatty acid oxidation complex subunit alpha (729 aa).

An enoyl-CoA hydratase/isomerase region spans residues 1–189; that stretch reads MLYKGDTLYL…KIGLVDGVVK (189 aa). Substrate is bound at residue D296. The segment at 311-729 is 3-hydroxyacyl-CoA dehydrogenase; it reads ETPKQAAVLG…ARPVGDLKTA (419 aa). NAD(+) contacts are provided by residues M324, D343, 400 to 402, K407, and S429; that span reads IVE. The active-site For 3-hydroxyacyl-CoA dehydrogenase activity is H450. Position 453 (N453) interacts with NAD(+). Residues N500 and Y660 each contribute to the substrate site. The segment at 708–729 is disordered; the sequence is RHNEPYYPPVEPARPVGDLKTA.

It in the N-terminal section; belongs to the enoyl-CoA hydratase/isomerase family. In the C-terminal section; belongs to the 3-hydroxyacyl-CoA dehydrogenase family. In terms of assembly, heterotetramer of two alpha chains (FadB) and two beta chains (FadA).

It catalyses the reaction a (3S)-3-hydroxyacyl-CoA + NAD(+) = a 3-oxoacyl-CoA + NADH + H(+). The catalysed reaction is a (3S)-3-hydroxyacyl-CoA = a (2E)-enoyl-CoA + H2O. The enzyme catalyses a 4-saturated-(3S)-3-hydroxyacyl-CoA = a (3E)-enoyl-CoA + H2O. It carries out the reaction (3S)-3-hydroxybutanoyl-CoA = (3R)-3-hydroxybutanoyl-CoA. It catalyses the reaction a (3Z)-enoyl-CoA = a 4-saturated (2E)-enoyl-CoA. The catalysed reaction is a (3E)-enoyl-CoA = a 4-saturated (2E)-enoyl-CoA. It participates in lipid metabolism; fatty acid beta-oxidation. Involved in the aerobic and anaerobic degradation of long-chain fatty acids via beta-oxidation cycle. Catalyzes the formation of 3-oxoacyl-CoA from enoyl-CoA via L-3-hydroxyacyl-CoA. It can also use D-3-hydroxyacyl-CoA and cis-3-enoyl-CoA as substrate. This is Fatty acid oxidation complex subunit alpha from Escherichia coli O157:H7.